A 334-amino-acid chain; its full sequence is Spermidine synthase 1 (334 aa).

The interval 1-37 (MAAPENTLHSTDSPLKRQREDEVNGVSDTLSKEPQPN) is disordered. Residues 26 to 37 (VSDTLSKEPQPN) are compositionally biased toward polar residues. Residues 44-281 (PGWFSEISPM…GMIGFMLCST (238 aa)) enclose the PABS domain. Q75 is a binding site for S-adenosyl 3-(methylsulfanyl)propylamine. Y105 provides a ligand contact to putrescine. Residues Q106, D130, E150, 181–182 (DG), and D200 contribute to the S-adenosyl 3-(methylsulfanyl)propylamine site. The Proton acceptor role is filled by D200. Putrescine-binding positions include 200–203 (DSSD) and Y269.

Belongs to the spermidine/spermine synthase family.

It carries out the reaction S-adenosyl 3-(methylsulfanyl)propylamine + putrescine = S-methyl-5'-thioadenosine + spermidine + H(+). It functions in the pathway amine and polyamine biosynthesis; spermidine biosynthesis; spermidine from putrescine: step 1/1. In Pisum sativum (Garden pea), this protein is Spermidine synthase 1 (SPDSYN1).